We begin with the raw amino-acid sequence, 128 residues long: Holo-[acyl-carrier-protein] synthase (128 aa).

Mg(2+)-binding residues include Asp8 and Glu60.

This sequence belongs to the P-Pant transferase superfamily. AcpS family. It depends on Mg(2+) as a cofactor.

It localises to the cytoplasm. It carries out the reaction apo-[ACP] + CoA = holo-[ACP] + adenosine 3',5'-bisphosphate + H(+). Transfers the 4'-phosphopantetheine moiety from coenzyme A to a Ser of acyl-carrier-protein. This is Holo-[acyl-carrier-protein] synthase from Anaeromyxobacter dehalogenans (strain 2CP-C).